The primary structure comprises 549 residues: Probable glucomannan 4-beta-mannosyltransferase 4 (549 aa).

The helical transmembrane segment at 35–55 (VAPVLQFAVWACMAMSVMLVL) threads the bilayer. The active site involves aspartate 151. Substrate is bound by residues aspartate 210 and aspartate 212. Aspartate 304 is an active-site residue. The next 4 membrane-spanning stretches (helical) occupy residues 383–403 (VVAP…SVMV), 406–426 (VSIP…MNAI), 497–517 (IYIP…YDLV), and 523–543 (YYLY…GFAG).

This sequence belongs to the glycosyltransferase 2 family. Plant cellulose synthase-like A subfamily.

The protein resides in the golgi apparatus membrane. It carries out the reaction GDP-mannose + (glucomannan)n = GDP + (glucomannan)n+1.. Functionally, probable mannan synthase which consists of a 4-beta-mannosyltransferase activity on mannan using GDP-mannose. The beta-1,4-mannan product is the backbone for galactomannan synthesis by galactomannan galactosyltransferase. Galactomannan is a noncellulosic polysaccharides of plant cell wall. In Oryza sativa subsp. japonica (Rice), this protein is Probable glucomannan 4-beta-mannosyltransferase 4.